Reading from the N-terminus, the 289-residue chain is ATP synthase gamma chain (289 aa).

This sequence belongs to the ATPase gamma chain family. As to quaternary structure, F-type ATPases have 2 components, CF(1) - the catalytic core - and CF(0) - the membrane proton channel. CF(1) has five subunits: alpha(3), beta(3), gamma(1), delta(1), epsilon(1). CF(0) has three main subunits: a, b and c.

The protein resides in the cell inner membrane. Its function is as follows. Produces ATP from ADP in the presence of a proton gradient across the membrane. The gamma chain is believed to be important in regulating ATPase activity and the flow of protons through the CF(0) complex. The polypeptide is ATP synthase gamma chain (Haemophilus influenzae (strain 86-028NP)).